The chain runs to 364 residues: MAQTLLNDTFLRALLREPTDYTPIWLMRQAGRYLPEYNATRARAGSFLGLAKQPDYATEVTLQPLERFPLDAAILFSDILTIPDAMGLGLDFAAGEGPKFAHPVRTEADVAKLAVPDIGATLGYVTDAVREIRRALTDGEGRQRVPLIGFSGSPWTLACYMVEGGGSDDFRTVKSMAYARPDLMHRILDVNAQAVAAYLNAQIEAGAQAVMIFDTWGGALADGGYQRFSLDYVRRVLAQLKREHDGARVPAIAFTKGGGLWLEELAATGVDAVGLDWTVNLGRARERVAGRVALQGNLDPTILFAPPEAIRAEARAVLDSYGNHPGHVFNLGHGISQFTPPEHVAELVDEVHRHSRAIRSGAGS.

Substrate is bound by residues 28–32 (RQAGR), aspartate 78, tyrosine 160, threonine 215, and histidine 333.

It belongs to the uroporphyrinogen decarboxylase family. In terms of assembly, homodimer.

It is found in the cytoplasm. It carries out the reaction uroporphyrinogen III + 4 H(+) = coproporphyrinogen III + 4 CO2. Its pathway is porphyrin-containing compound metabolism; protoporphyrin-IX biosynthesis; coproporphyrinogen-III from 5-aminolevulinate: step 4/4. Its function is as follows. Catalyzes the decarboxylation of four acetate groups of uroporphyrinogen-III to yield coproporphyrinogen-III. This chain is Uroporphyrinogen decarboxylase, found in Burkholderia mallei (strain NCTC 10247).